A 315-amino-acid polypeptide reads, in one-letter code: DNA-directed RNA polymerase subunit alpha (315 aa).

The alpha N-terminal domain (alpha-NTD) stretch occupies residues 1–228 (MLEIEKPVIQ…EHFKLFMTLT (228 aa)). Residues 245 to 315 (KEKALEMTIE…LGLNLRLNDE (71 aa)) are alpha C-terminal domain (alpha-CTD).

Belongs to the RNA polymerase alpha chain family. Homodimer. The RNAP catalytic core consists of 2 alpha, 1 beta, 1 beta' and 1 omega subunit. When a sigma factor is associated with the core the holoenzyme is formed, which can initiate transcription.

It catalyses the reaction RNA(n) + a ribonucleoside 5'-triphosphate = RNA(n+1) + diphosphate. Functionally, DNA-dependent RNA polymerase catalyzes the transcription of DNA into RNA using the four ribonucleoside triphosphates as substrates. The protein is DNA-directed RNA polymerase subunit alpha of Clostridium perfringens (strain ATCC 13124 / DSM 756 / JCM 1290 / NCIMB 6125 / NCTC 8237 / Type A).